The primary structure comprises 152 residues: Protein-export protein SecB (152 aa).

It belongs to the SecB family. Homotetramer, a dimer of dimers. One homotetramer interacts with 1 SecA dimer.

Its subcellular location is the cytoplasm. Functionally, one of the proteins required for the normal export of preproteins out of the cell cytoplasm. It is a molecular chaperone that binds to a subset of precursor proteins, maintaining them in a translocation-competent state. It also specifically binds to its receptor SecA. This is Protein-export protein SecB from Rickettsia massiliae (strain Mtu5).